Here is a 97-residue protein sequence, read N- to C-terminus: Glutamyl-tRNA(Gln) amidotransferase subunit C (97 aa).

The protein belongs to the GatC family. As to quaternary structure, heterotrimer of A, B and C subunits.

The enzyme catalyses L-glutamyl-tRNA(Gln) + L-glutamine + ATP + H2O = L-glutaminyl-tRNA(Gln) + L-glutamate + ADP + phosphate + H(+). It catalyses the reaction L-aspartyl-tRNA(Asn) + L-glutamine + ATP + H2O = L-asparaginyl-tRNA(Asn) + L-glutamate + ADP + phosphate + 2 H(+). Its function is as follows. Allows the formation of correctly charged Asn-tRNA(Asn) or Gln-tRNA(Gln) through the transamidation of misacylated Asp-tRNA(Asn) or Glu-tRNA(Gln) in organisms which lack either or both of asparaginyl-tRNA or glutaminyl-tRNA synthetases. The reaction takes place in the presence of glutamine and ATP through an activated phospho-Asp-tRNA(Asn) or phospho-Glu-tRNA(Gln). This chain is Glutamyl-tRNA(Gln) amidotransferase subunit C, found in Sulfurisphaera tokodaii (strain DSM 16993 / JCM 10545 / NBRC 100140 / 7) (Sulfolobus tokodaii).